The following is a 110-amino-acid chain: Protein P2 (110 aa).

Residues 72 to 82 are compositionally biased toward polar residues; the sequence is KLPTTSGSSSA. Residues 72–110 form a disordered region; the sequence is KLPTTSGSSSAGAIVPAGSNTQGQYKAPPKKGIKRKYPA. Residues 99–110 show a composition bias toward basic residues; the sequence is PPKKGIKRKYPA.

This Oryza sativa (Rice) protein is Protein P2.